Consider the following 141-residue polypeptide: Nucleoside triphosphatase NudI (141 aa).

One can recognise a Nudix hydrolase domain in the interval 1 to 141 (MRQRTIVCPL…RHTLALKGLL (141 aa)). Positions 38–59 (GGVEPGERIEEALRREIREELG) match the Nudix box motif.

This sequence belongs to the Nudix hydrolase family. NudI subfamily. As to quaternary structure, monomer. Mg(2+) serves as cofactor.

The enzyme catalyses a ribonucleoside 5'-triphosphate + H2O = a ribonucleoside 5'-phosphate + diphosphate + H(+). It catalyses the reaction a 2'-deoxyribonucleoside 5'-triphosphate + H2O = a 2'-deoxyribonucleoside 5'-phosphate + diphosphate + H(+). It carries out the reaction dUTP + H2O = dUMP + diphosphate + H(+). The catalysed reaction is dTTP + H2O = dTMP + diphosphate + H(+). The enzyme catalyses dCTP + H2O = dCMP + diphosphate + H(+). Catalyzes the hydrolysis of nucleoside triphosphates, with a preference for pyrimidine deoxynucleoside triphosphates (dUTP, dTTP and dCTP). The polypeptide is Nucleoside triphosphatase NudI (Salmonella heidelberg (strain SL476)).